The chain runs to 546 residues: Phosphomethylpyrimidine synthase (546 aa).

Residues Asn145, Met174, Tyr203, His239, 259–261, 300–303, and Glu339 each bind substrate; these read SRG and DGLR. Zn(2+) is bound at residue His343. Tyr366 is a binding site for substrate. His407 contributes to the Zn(2+) binding site. The [4Fe-4S] cluster site is built by Cys487, Cys490, and Cys495.

It belongs to the ThiC family. [4Fe-4S] cluster serves as cofactor.

It catalyses the reaction 5-amino-1-(5-phospho-beta-D-ribosyl)imidazole + S-adenosyl-L-methionine = 4-amino-2-methyl-5-(phosphooxymethyl)pyrimidine + CO + 5'-deoxyadenosine + formate + L-methionine + 3 H(+). It participates in cofactor biosynthesis; thiamine diphosphate biosynthesis. In terms of biological role, catalyzes the synthesis of the hydroxymethylpyrimidine phosphate (HMP-P) moiety of thiamine from aminoimidazole ribotide (AIR) in a radical S-adenosyl-L-methionine (SAM)-dependent reaction. The chain is Phosphomethylpyrimidine synthase from Mycobacterium marinum (strain ATCC BAA-535 / M).